Reading from the N-terminus, the 208-residue chain is RxLR effector protein Avr1 (208 aa).

An N-terminal signal peptide occupies residues 1–22; it reads MGLMHRVLLLATFALLCMHAKA. The RxLR-dEER motif lies at 41–54; that stretch reads RQLRTATMSDDEAR. A W1-motif region spans residues 70–92; that stretch reads KIESWIQNKVTDDFVLSELKLVR. The interval 93–110 is linker region ln1; it reads LPGTSLADDPNFKLFQKF. A W2-motif region spans residues 111-136; that stretch reads KIGGWLEEKATTTKAWENLGLDSLPF. Positions 137–157 are Y-motif; the sequence is DQVSKIDEFKTYTQYVTVLNK. The tract at residues 158–170 is linker region ln2; it reads KASKLDIDQWHGL. The tract at residues 170–208 is T-region; that stretch reads LLSGGSPEELMAKAMILRTLGRDVLERRVMLGGHVVVPF.

It belongs to the RxLR effector family. In terms of assembly, interacts with host exocyst component Sec5.

The protein resides in the secreted. The protein localises to the host cytoplasm. It is found in the host nucleus. It localises to the host peroxisome. Functionally, secreted effector that acts as an elicitor of hypersensitive response (HR) specifically on plants carrying defense protein R1, through its interaction with this protein. Also acts as a virulence factor that promotes colonization and suppresses cell death induced by CRN2 as well as callose deposition, a hallmark of basal defense. Interacts with host exocyst component Sec5 and thereby disturbs vesicle trafficking, a cellular process that is important for basal defense. By targeting and stabilizing Sec5 in the cytoplasm, the exocyst complex is thus out of balance and not able to mediate the focal secretion of PR-1 and callose. This Phytophthora infestans (strain T30-4) (Potato late blight agent) protein is RxLR effector protein Avr1.